Reading from the N-terminus, the 288-residue chain is ATP synthase gamma chain (288 aa).

The protein belongs to the ATPase gamma chain family. In terms of assembly, F-type ATPases have 2 components, CF(1) - the catalytic core - and CF(0) - the membrane proton channel. CF(1) has five subunits: alpha(3), beta(3), gamma(1), delta(1), epsilon(1). CF(0) has three main subunits: a, b and c.

It is found in the cell inner membrane. Its function is as follows. Produces ATP from ADP in the presence of a proton gradient across the membrane. The gamma chain is believed to be important in regulating ATPase activity and the flow of protons through the CF(0) complex. In Blochmanniella pennsylvanica (strain BPEN), this protein is ATP synthase gamma chain.